The sequence spans 215 residues: Endonuclease III (215 aa).

A HhH domain is found at 113 to 132; that stretch reads REDLESLPGVGRKTANVILN. 4 residues coordinate [4Fe-4S] cluster: Cys-192, Cys-199, Cys-202, and Cys-208.

This sequence belongs to the Nth/MutY family. The cofactor is [4Fe-4S] cluster.

It catalyses the reaction 2'-deoxyribonucleotide-(2'-deoxyribose 5'-phosphate)-2'-deoxyribonucleotide-DNA = a 3'-end 2'-deoxyribonucleotide-(2,3-dehydro-2,3-deoxyribose 5'-phosphate)-DNA + a 5'-end 5'-phospho-2'-deoxyribonucleoside-DNA + H(+). Its function is as follows. DNA repair enzyme that has both DNA N-glycosylase activity and AP-lyase activity. The DNA N-glycosylase activity releases various damaged pyrimidines from DNA by cleaving the N-glycosidic bond, leaving an AP (apurinic/apyrimidinic) site. The AP-lyase activity cleaves the phosphodiester bond 3' to the AP site by a beta-elimination, leaving a 3'-terminal unsaturated sugar and a product with a terminal 5'-phosphate. This chain is Endonuclease III, found in Buchnera aphidicola subsp. Baizongia pistaciae (strain Bp).